We begin with the raw amino-acid sequence, 89 residues long: Small ribosomal subunit protein uS15 (89 aa).

Belongs to the universal ribosomal protein uS15 family. As to quaternary structure, part of the 30S ribosomal subunit. Forms a bridge to the 50S subunit in the 70S ribosome, contacting the 23S rRNA.

In terms of biological role, one of the primary rRNA binding proteins, it binds directly to 16S rRNA where it helps nucleate assembly of the platform of the 30S subunit by binding and bridging several RNA helices of the 16S rRNA. Forms an intersubunit bridge (bridge B4) with the 23S rRNA of the 50S subunit in the ribosome. This is Small ribosomal subunit protein uS15 from Bartonella tribocorum (strain CIP 105476 / IBS 506).